Here is a 237-residue protein sequence, read N- to C-terminus: Peptidase E (237 aa).

Active-site charge relay system residues include S122, D137, and H159.

This sequence belongs to the peptidase S51 family.

It localises to the cytoplasm. The catalysed reaction is Dipeptidase E catalyzes the hydrolysis of dipeptides Asp-|-Xaa. It does not act on peptides with N-terminal Glu, Asn or Gln, nor does it cleave isoaspartyl peptides.. Its function is as follows. Hydrolyzes dipeptides containing N-terminal aspartate residues. May play a role in allowing the cell to use peptide aspartate to spare carbon otherwise required for the synthesis of the aspartate family of amino acids. The chain is Peptidase E from Shewanella baltica (strain OS155 / ATCC BAA-1091).